The primary structure comprises 175 residues: Ribosome maturation factor RimM (175 aa).

Residues D98–L172 enclose the PRC barrel domain.

Belongs to the RimM family. Binds ribosomal protein uS19.

The protein localises to the cytoplasm. In terms of biological role, an accessory protein needed during the final step in the assembly of 30S ribosomal subunit, possibly for assembly of the head region. Essential for efficient processing of 16S rRNA. May be needed both before and after RbfA during the maturation of 16S rRNA. It has affinity for free ribosomal 30S subunits but not for 70S ribosomes. This Synechococcus sp. (strain RCC307) protein is Ribosome maturation factor RimM.